A 680-amino-acid chain; its full sequence is DNA-directed RNA polymerase subunit beta' (680 aa).

Positions 68, 70, 86, and 89 each coordinate Zn(2+). Positions 488, 490, and 492 each coordinate Mg(2+).

Belongs to the RNA polymerase beta' chain family. RpoC1 subfamily. In terms of assembly, in plastids the minimal PEP RNA polymerase catalytic core is composed of four subunits: alpha, beta, beta', and beta''. When a (nuclear-encoded) sigma factor is associated with the core the holoenzyme is formed, which can initiate transcription. Mg(2+) is required as a cofactor. Requires Zn(2+) as cofactor.

Its subcellular location is the plastid. The protein resides in the chloroplast. It carries out the reaction RNA(n) + a ribonucleoside 5'-triphosphate = RNA(n+1) + diphosphate. Its function is as follows. DNA-dependent RNA polymerase catalyzes the transcription of DNA into RNA using the four ribonucleoside triphosphates as substrates. The sequence is that of DNA-directed RNA polymerase subunit beta' from Nicotiana tabacum (Common tobacco).